A 294-amino-acid chain; its full sequence is Cytidine deaminase (294 aa).

CMP/dCMP-type deaminase domains follow at residues 48–168 and 187–294; these read DDDA…FGPT and AETD…RVTF. 89 to 91 is a substrate binding site; the sequence is NME. Zn(2+) is bound at residue H102. Catalysis depends on E104, which acts as the Proton donor. Residues C129 and C132 each contribute to the Zn(2+) site.

Belongs to the cytidine and deoxycytidylate deaminase family. As to quaternary structure, homodimer. It depends on Zn(2+) as a cofactor.

The enzyme catalyses cytidine + H2O + H(+) = uridine + NH4(+). The catalysed reaction is 2'-deoxycytidine + H2O + H(+) = 2'-deoxyuridine + NH4(+). Its function is as follows. This enzyme scavenges exogenous and endogenous cytidine and 2'-deoxycytidine for UMP synthesis. The sequence is that of Cytidine deaminase from Yersinia pseudotuberculosis serotype O:1b (strain IP 31758).